Consider the following 754-residue polypeptide: Protein NUCLEOLAR FACTOR 1 (754 aa).

Disordered regions lie at residues 1 to 56 (MAPN…EAMV), 69 to 166 (SLGS…ELST), and 390 to 413 (EDTD…QKSS). Acidic residues predominate over residues 42 to 52 (SPEESSIEAES). Residues 80-93 (MNKRRQREEEGKSD) show a composition bias toward basic and acidic residues. 2 stretches are compositionally biased toward acidic residues: residues 94–110 (TEED…ENSG) and 138–161 (DTQE…DEEV). Positions 402–413 (SKNGNSIKQKSS) are enriched in polar residues.

It belongs to the UTP25 family. Component of the ribosomal small subunit (SSU) processome composed of at least 40 protein subunits and snoRNA U3. Interacts with THAL in the nucleus. In terms of tissue distribution, preferentially expressed in differentiating cells in young tissues such as floral buds, ovules, embryos, secondary roots, pollen, young seedlings and vascular bundles. Observed ubiquitously.

Its subcellular location is the nucleus. The protein resides in the nucleolus. DEAD-box RNA helicase-like protein required for pre-18S rRNA processing, specifically at sites A0, A1, and A2. Involved in the control of rRNA expression. Required for embryo development and female gametogenesis. The polypeptide is Protein NUCLEOLAR FACTOR 1 (Arabidopsis thaliana (Mouse-ear cress)).